A 514-amino-acid chain; its full sequence is Membrane-bound lytic murein transglycosylase F (514 aa).

Positions 1 to 30 are cleaved as a signal peptide; the sequence is MKKLKINYLFIGILTLLLAAALWPSIPWFG. Positions 31-269 are non-LT domain; sequence KTENHIAAIQ…RIEEKYLGHG (239 aa). The interval 270 to 514 is LT domain; sequence DDFDYVDTRS…LFTPQKKEEK (245 aa). Glutamate 314 is an active-site residue.

This sequence in the N-terminal section; belongs to the bacterial solute-binding protein 3 family. It in the C-terminal section; belongs to the transglycosylase Slt family.

Its subcellular location is the cell outer membrane. It carries out the reaction Exolytic cleavage of the (1-&gt;4)-beta-glycosidic linkage between N-acetylmuramic acid (MurNAc) and N-acetylglucosamine (GlcNAc) residues in peptidoglycan, from either the reducing or the non-reducing ends of the peptidoglycan chains, with concomitant formation of a 1,6-anhydrobond in the MurNAc residue.. Its function is as follows. Murein-degrading enzyme that degrades murein glycan strands and insoluble, high-molecular weight murein sacculi, with the concomitant formation of a 1,6-anhydromuramoyl product. Lytic transglycosylases (LTs) play an integral role in the metabolism of the peptidoglycan (PG) sacculus. Their lytic action creates space within the PG sacculus to allow for its expansion as well as for the insertion of various structures such as secretion systems and flagella. This is Membrane-bound lytic murein transglycosylase F from Salmonella typhimurium (strain LT2 / SGSC1412 / ATCC 700720).